Reading from the N-terminus, the 114-residue chain is uncharacterized protein (114 aa).

The disordered stretch occupies residues 1–37; sequence MLKKILSLFKKEEPKTEEKPTEVEEKKEEREEKEEKK. Positions 9–37 are enriched in basic and acidic residues; the sequence is FKKEEPKTEEKPTEVEEKKEEREEKEEKK.

This is an uncharacterized protein from Aquifex aeolicus (strain VF5).